A 535-amino-acid chain; its full sequence is T-complex protein 1 subunit epsilon (535 aa).

This sequence belongs to the TCP-1 chaperonin family. Heterooligomeric complex of about 850 to 900 kDa that forms two stacked rings, 12 to 16 nm in diameter.

The protein localises to the cytoplasm. Functionally, molecular chaperone; assists the folding of proteins upon ATP hydrolysis. Known to play a role, in vitro, in the folding of actin and tubulin. This Arabidopsis thaliana (Mouse-ear cress) protein is T-complex protein 1 subunit epsilon.